Here is a 23-residue protein sequence, read N- to C-terminus: Coenzyme PQQ synthesis protein A (23 aa).

The segment at residues 15-19 is a cross-link (pyrroloquinoline quinone (Glu-Tyr)); that stretch reads EVTMY.

The protein belongs to the PqqA family.

Its pathway is cofactor biosynthesis; pyrroloquinoline quinone biosynthesis. Functionally, required for coenzyme pyrroloquinoline quinone (PQQ) biosynthesis. PQQ is probably formed by cross-linking a specific glutamate to a specific tyrosine residue and excising these residues from the peptide. This is Coenzyme PQQ synthesis protein A from Ectopseudomonas mendocina (strain ymp) (Pseudomonas mendocina).